Consider the following 197-residue polypeptide: Dephospho-CoA kinase (197 aa).

A DPCK domain is found at 2 to 197 (IIGLTGGIAS…GAIKDLANLV (196 aa)). An ATP-binding site is contributed by 10–15 (ASGKST).

It belongs to the CoaE family.

The protein resides in the cytoplasm. The catalysed reaction is 3'-dephospho-CoA + ATP = ADP + CoA + H(+). The protein operates within cofactor biosynthesis; coenzyme A biosynthesis; CoA from (R)-pantothenate: step 5/5. In terms of biological role, catalyzes the phosphorylation of the 3'-hydroxyl group of dephosphocoenzyme A to form coenzyme A. The protein is Dephospho-CoA kinase of Streptococcus thermophilus (strain CNRZ 1066).